We begin with the raw amino-acid sequence, 307 residues long: Ribonuclease Z (307 aa).

Residues His64, His66, Asp68, His69, His141, Asp209, and His267 each coordinate Zn(2+). Asp68 functions as the Proton acceptor in the catalytic mechanism.

Belongs to the RNase Z family. In terms of assembly, homodimer. It depends on Zn(2+) as a cofactor.

The catalysed reaction is Endonucleolytic cleavage of RNA, removing extra 3' nucleotides from tRNA precursor, generating 3' termini of tRNAs. A 3'-hydroxy group is left at the tRNA terminus and a 5'-phosphoryl group is left at the trailer molecule.. Zinc phosphodiesterase, which displays some tRNA 3'-processing endonuclease activity. Probably involved in tRNA maturation, by removing a 3'-trailer from precursor tRNA. The polypeptide is Ribonuclease Z (Thermoplasma acidophilum (strain ATCC 25905 / DSM 1728 / JCM 9062 / NBRC 15155 / AMRC-C165)).